The sequence spans 293 residues: Fructose-bisphosphate aldolase (293 aa).

D-glyceraldehyde 3-phosphate is bound at residue Ser50. The active-site Proton donor is Asp85. The Zn(2+) site is built by His86, Asp106, Glu136, and His178. Gly179 contributes to the dihydroxyacetone phosphate binding site. His208 lines the Zn(2+) pocket. Dihydroxyacetone phosphate contacts are provided by residues 209–211 (GGS) and 230–233 (NVNT).

The protein belongs to the class II fructose-bisphosphate aldolase family. Zn(2+) serves as cofactor.

The enzyme catalyses beta-D-fructose 1,6-bisphosphate = D-glyceraldehyde 3-phosphate + dihydroxyacetone phosphate. The protein operates within carbohydrate degradation; glycolysis; D-glyceraldehyde 3-phosphate and glycerone phosphate from D-glucose: step 4/4. Functionally, catalyzes the aldol condensation of dihydroxyacetone phosphate (DHAP or glycerone-phosphate) with glyceraldehyde 3-phosphate (G3P) to form fructose 1,6-bisphosphate (FBP) in gluconeogenesis and the reverse reaction in glycolysis. This Streptococcus pyogenes serotype M1 protein is Fructose-bisphosphate aldolase (fba).